The sequence spans 127 residues: Protein ApaG (127 aa).

Residues 3-127 (DDPRYRVEVE…FVLSVPRTLH (125 aa)) form the ApaG domain.

This Xanthomonas axonopodis pv. citri (strain 306) protein is Protein ApaG.